The chain runs to 578 residues: Isocitrate dehydrogenase kinase/phosphatase (578 aa).

ATP contacts are provided by residues 315 to 321 (APGIRGM) and Lys-336. Residue Asp-371 is part of the active site.

The protein belongs to the AceK family.

The protein localises to the cytoplasm. The catalysed reaction is L-seryl-[isocitrate dehydrogenase] + ATP = O-phospho-L-seryl-[isocitrate dehydrogenase] + ADP + H(+). Functionally, bifunctional enzyme which can phosphorylate or dephosphorylate isocitrate dehydrogenase (IDH) on a specific serine residue. This is a regulatory mechanism which enables bacteria to bypass the Krebs cycle via the glyoxylate shunt in response to the source of carbon. When bacteria are grown on glucose, IDH is fully active and unphosphorylated, but when grown on acetate or ethanol, the activity of IDH declines drastically concomitant with its phosphorylation. This Escherichia coli O139:H28 (strain E24377A / ETEC) protein is Isocitrate dehydrogenase kinase/phosphatase.